A 479-amino-acid chain; its full sequence is MSEVRVRFAPSPTGSLHIGGARTALFNWLFARHNGGKFILRVDDTDLQRSTEESMKGILEGLKWLGIDWDEGPIYQSQRLEEYRKFANKLLKEGKAYYCFCTKEELEEMRKQAEKEGRPPMYTGKCRNLTKEQIEEYLRQGKKPVIRLKVPQQGKTVVHDIIRGDVEFDNSTFDDFIIMKSDNMPTYNFATVVDDYQMGITHVIRAEEHLSNTPKQILIFEALGLEIPQFAHVSMVLAPDRSKLSKRHGATSVQEFRDQGYLPEAIVNYITLLGWIPKDGEEIFDVSKSKKEFTLERVSKNPAIYDVQKLTWINGHYIRNYDLDKLTEVVIPFLKAKNFIGEDFDYDYIKKIVSVVREREKTLVDVADAMSYYFTEVYEYEEKGVKKYFTKEKVVDILKKAVVTLKEVEPFNKFTTEEAYRKLVEELQISSGELFHPTRLAISGRTFGPGLFDIMELLGKERTIERIEKAIDFIQKMRK.

A 'HIGH' region motif is present at residues 10–20 (PSPTGSLHIGG). Positions 243 to 247 (KLSKR) match the 'KMSKS' region motif. Lys-246 contributes to the ATP binding site.

It belongs to the class-I aminoacyl-tRNA synthetase family. Glutamate--tRNA ligase type 1 subfamily. As to quaternary structure, monomer.

It localises to the cytoplasm. The catalysed reaction is tRNA(Glu) + L-glutamate + ATP = L-glutamyl-tRNA(Glu) + AMP + diphosphate. Its function is as follows. Catalyzes the attachment of glutamate to tRNA(Glu) in a two-step reaction: glutamate is first activated by ATP to form Glu-AMP and then transferred to the acceptor end of tRNA(Glu). The protein is Glutamate--tRNA ligase 2 of Thermoanaerobacter pseudethanolicus (strain ATCC 33223 / 39E) (Clostridium thermohydrosulfuricum).